An 855-amino-acid chain; its full sequence is DNA mismatch repair protein MutS (855 aa).

An ATP-binding site is contributed by 613–620 (GPNMGGKS).

Belongs to the DNA mismatch repair MutS family.

Functionally, this protein is involved in the repair of mismatches in DNA. It is possible that it carries out the mismatch recognition step. This protein has a weak ATPase activity. This is DNA mismatch repair protein MutS from Azotobacter vinelandii (strain DJ / ATCC BAA-1303).